The following is a 185-amino-acid chain: Adenine phosphoribosyltransferase (185 aa).

It belongs to the purine/pyrimidine phosphoribosyltransferase family. As to quaternary structure, homodimer.

It localises to the cytoplasm. It carries out the reaction AMP + diphosphate = 5-phospho-alpha-D-ribose 1-diphosphate + adenine. Its pathway is purine metabolism; AMP biosynthesis via salvage pathway; AMP from adenine: step 1/1. In terms of biological role, catalyzes a salvage reaction resulting in the formation of AMP, that is energically less costly than de novo synthesis. The polypeptide is Adenine phosphoribosyltransferase (Nocardioides sp. (strain ATCC BAA-499 / JS614)).